A 96-amino-acid polypeptide reads, in one-letter code: Mapk-regulated corepressor-interacting protein 1 (96 aa).

2 disordered regions span residues 1–28 and 76–96; these read MASS…GSEI and AFKP…AKKS. Residues 79-83 carry the PXDLS motif motif; that stretch reads PVDLS. The span at 81–96 shows a compositional bias: basic and acidic residues; that stretch reads DLSDLKRRNTQDAKKS.

The protein belongs to the MCRIP family.

The protein localises to the nucleus. It localises to the cytoplasm. It is found in the stress granule. May play a role in the regulation of the epithelial-mesenchymal transition. The polypeptide is Mapk-regulated corepressor-interacting protein 1 (MCRIP1) (Gallus gallus (Chicken)).